Reading from the N-terminus, the 297-residue chain is CASP-like protein 4A2 (297 aa).

Residues 1–136 (MKMKRTVSSN…MNGEESATTA (136 aa)) are disordered. Residues 1-149 (MKMKRTVSSN…ARRDDLVSVT (149 aa)) are Cytoplasmic-facing. Residues 8 to 19 (SSNSEAYSYNES) show a composition bias toward low complexity. A compositionally biased stretch (pro residues) spans 69–83 (LPSPIPPPPPQIPPP). A compositionally biased stretch (polar residues) spans 93-121 (MNSSLDKSPSSMVVQNSWVREDGQQNTTR). Residues 150–170 (ALGFRITEVILCVISFSIMAA) form a helical membrane-spanning segment. The Extracellular portion of the chain corresponds to 171 to 189 (DKTQGWSGDSYDRYKEYRY). Residues 190–210 (CLAVNVIAFVYSAFEACDAAC) form a helical membrane-spanning segment. Residues 211 to 225 (YMAKESYMMNCGFHD) lie on the Cytoplasmic side of the membrane. The chain crosses the membrane as a helical span at residues 226-246 (LFVFSMDQLLAYLLMSASSCA). Topologically, residues 247-265 (ATRVDDWVSNWGKDEFTQM) are extracellular. Residues 266-286 (ATASIAVSFLAFGAFAVSALI) form a helical membrane-spanning segment. Topologically, residues 287 to 297 (SSYRLFTHASS) are cytoplasmic.

Belongs to the Casparian strip membrane proteins (CASP) family. As to quaternary structure, homodimer and heterodimers.

It is found in the cell membrane. The chain is CASP-like protein 4A2 from Arabidopsis lyrata subsp. lyrata (Lyre-leaved rock-cress).